We begin with the raw amino-acid sequence, 507 residues long: Alkyl hydroperoxide reductase subunit F (507 aa).

207–222 provides a ligand contact to FAD; that stretch reads DVLIVGGGPASGSAAI. Cys-335 and Cys-338 are oxidised to a cystine. An NAD(+)-binding site is contributed by 347–361; sequence DVAVIGGGNSGVEAA. Position 467–477 (467–477) interacts with FAD; that stretch reads TNVPGIFAAGD.

This sequence belongs to the class-II pyridine nucleotide-disulfide oxidoreductase family. In terms of assembly, homodimer. Requires FAD as cofactor.

Serves to protect the cell against DNA damage by alkyl hydroperoxides. It can use either NADH or NADPH as electron donor for direct reduction of redox dyes or of alkyl hydroperoxides when combined with the AhpC protein. This Staphylococcus aureus (strain NCTC 8325 / PS 47) protein is Alkyl hydroperoxide reductase subunit F (ahpF).